The following is a 304-amino-acid chain: Voltage-dependent anion channel-forming protein YneE (304 aa).

Transmembrane regions (helical) follow at residues 28–48 (LLLN…YTHL), 50–70 (IKFT…FLGF), 194–214 (VLAG…TLIL), and 220–240 (LFCI…TPFI).

The protein belongs to the anion channel-forming bestrophin (TC 1.A.46) family.

It is found in the cell membrane. The polypeptide is Voltage-dependent anion channel-forming protein YneE (yneE) (Escherichia coli O157:H7).